Here is a 643-residue protein sequence, read N- to C-terminus: Clathrin interactor 1 (643 aa).

The 134-residue stretch at Asn16–Arg149 folds into the ENTH domain. An a 1,2-diacyl-sn-glycero-3-phospho-(1D-myo-inositol-4,5-bisphosphate)-binding site is contributed by Arg29. Residues Phe52–Tyr54 are interaction with VTI1B. Arg67 is a binding site for a 1,2-diacyl-sn-glycero-3-phospho-(1D-myo-inositol-4,5-bisphosphate). Interaction with VTI1B regions lie at residues Ser94–Arg96 and Asp142–Lys153. Ser163, Ser166, Ser173, Ser205, Ser210, Ser227, Ser245, and Ser299 each carry phosphoserine. A disordered region spans residues Phe219–Asp331. Residues Lys222–Lys239 are compositionally biased toward basic and acidic residues. The span at Pro300 to Gln310 shows a compositional bias: polar residues. Thr308 carries the phosphothreonine modification. Over residues Ser311–Ser323 the composition is skewed to low complexity. Phosphoserine is present on residues Ser312 and Ser642.

This sequence belongs to the epsin family. As to quaternary structure, binds clathrin heavy chain and AP-2. Interacts with VTI1B. Interacts with GGA2 (via GAE domain). Interacts with AP1G1 (via GAE domain). Interacts with AP1G2 (via GAE domain).

Its subcellular location is the cytoplasm. The protein resides in the perinuclear region. The protein localises to the membrane. It is found in the cytoplasmic vesicle. It localises to the clathrin-coated vesicle. In terms of biological role, binds to membranes enriched in phosphatidylinositol 4,5-bisphosphate (PtdIns(4,5)P2). May have a role in transport via clathrin-coated vesicles from the trans-Golgi network to endosomes. Stimulates clathrin assembly. The chain is Clathrin interactor 1 (CLINT1) from Bos taurus (Bovine).